The chain runs to 513 residues: Cytochrome P450 86A1 (513 aa).

Residues 7-27 traverse the membrane as a helical segment; sequence ILTGYAVAALSVYALWFYFLS. Cysteine 456 contributes to the heme binding site.

This sequence belongs to the cytochrome P450 family. Heme serves as cofactor. Expressed in roots.

It localises to the membrane. It catalyses the reaction an omega-methyl-long-chain fatty acid + reduced [NADPH--hemoprotein reductase] + O2 = an omega-hydroxy-long-chain fatty acid + oxidized [NADPH--hemoprotein reductase] + H2O + H(+). In terms of biological role, catalyzes the omega-hydroxylation of various fatty acids (FA). Acts on saturated and unsaturated fatty acids with chain lengths from C12 to C18 but not on hexadecane. This chain is Cytochrome P450 86A1 (CYP86A1), found in Arabidopsis thaliana (Mouse-ear cress).